The sequence spans 272 residues: Ingression protein fic1 (272 aa).

In terms of domain architecture, C2 spans 1 to 107 (MSKNPLGTLV…MKEELQSEWY (107 aa)). The tract at residues 155 to 187 (VPKKPSKPSKPRKKVPVSHPLPPTPPSREEHVS) is disordered. A compositionally biased stretch (basic residues) spans 158 to 170 (KPSKPSKPRKKVP).

It belongs to the INN1/fic1 family. Interacts with cdc15 and imp2.

The protein localises to the cytoplasm. The protein resides in the nucleus. In terms of biological role, involved in the ingression of the plasma membrane during cytokinesis, leading to the separation of the daughter cells. Unlike its S.cerevisiae ortholog INN1, it does not play an essential role, probably because the actinomyosin ring is connected to the cell cortex by many more proteins. The protein is Ingression protein fic1 (fic1) of Schizosaccharomyces pombe (strain 972 / ATCC 24843) (Fission yeast).